Here is a 3373-residue protein sequence, read N- to C-terminus: Intermembrane lipid transfer protein vps13A (3373 aa).

The Chorein N-terminal domain maps to 3-119 (FEGLVSDVLS…QAELKKKKLE (117 aa)). Disordered regions lie at residues 818 to 858 (PKAT…VNSS), 1028 to 1096 (VPIN…KTAS), 1259 to 1304 (NNNK…DLEK), 1648 to 1729 (DPSI…EEEK), and 1872 to 1913 (QKKR…GKKD). Positions 823–839 (TPINDSNSPSSVSPKLI) are enriched in polar residues. Composition is skewed to low complexity over residues 840-858 (STSP…VNSS) and 1048-1066 (SSPN…QSPQ). Composition is skewed to basic and acidic residues over residues 1263-1274 (SIEKSKSIDSKL) and 1288-1304 (RSDD…DLEK). Low complexity-rich tracts occupy residues 1659–1685 (QQQQ…RSQS), 1695–1716 (SSIG…SLSS), and 1884–1898 (SSST…STNS). The segment covering 1899–1909 (FQTSTSGNSNS) has biased composition (polar residues). In terms of domain architecture, SHR-BD spans 2405–2706 (TLSFYCQYWL…CYGWDEPSAE (302 aa)). Residues 2909-2933 (RGNNASNNNNNNGMTSSQMRQSGSG) are disordered. Residues 2911-2920 (NNASNNNNNN) show a composition bias toward low complexity.

The protein belongs to the VPS13 family.

Its subcellular location is the membrane. Mediates the transfer of lipids between membranes at organelle contact sites. In Dictyostelium discoideum (Social amoeba), this protein is Intermembrane lipid transfer protein vps13A (vps13A).